The chain runs to 343 residues: Putative ALA-interacting subunit 2 (343 aa).

Residues Pro-43 to Ile-63 form a helical membrane-spanning segment. 4 N-linked (GlcNAc...) asparagine glycosylation sites follow: Asn-103, Asn-178, Asn-191, and Asn-218. The helical transmembrane segment at Phe-301–Met-321 threads the bilayer.

The protein belongs to the CDC50/LEM3 family. In terms of tissue distribution, expressed in roots, leaves, stems, flowers and siliques.

It is found in the membrane. In Arabidopsis thaliana (Mouse-ear cress), this protein is Putative ALA-interacting subunit 2 (ALIS2).